The sequence spans 351 residues: Dihydroorotate dehydrogenase (quinone) (351 aa).

FMN is bound by residues 61-65 (AGLDK) and Thr85. Lys65 lines the substrate pocket. Residue 110–114 (NRMGF) coordinates substrate. Residues Asn139 and Asn172 each contribute to the FMN site. Asn172 contributes to the substrate binding site. The active-site Nucleophile is Ser175. Asn177 lines the substrate pocket. The FMN site is built by Lys217 and Thr245. Position 246–247 (246–247 (NT)) interacts with substrate. Residues Gly268, Gly297, and 318-319 (YT) each bind FMN.

Belongs to the dihydroorotate dehydrogenase family. Type 2 subfamily. In terms of assembly, monomer. FMN is required as a cofactor.

The protein localises to the cell membrane. It catalyses the reaction (S)-dihydroorotate + a quinone = orotate + a quinol. It participates in pyrimidine metabolism; UMP biosynthesis via de novo pathway; orotate from (S)-dihydroorotate (quinone route): step 1/1. Catalyzes the conversion of dihydroorotate to orotate with quinone as electron acceptor. The chain is Dihydroorotate dehydrogenase (quinone) from Xylella fastidiosa (strain M23).